The sequence spans 145 residues: MTLTDYVREVSLADFGKPFKHQASWNRRLRTTGGRFFPKDGHLDFNPKILEEHGETVFRQIVRHELCHYHLYFEGLGFRHKDQAFKELLDQVDGLRYAPRLQSHQANYLYICQHCGQAYDRKRPINLAVFACGRCHGRLIEKNQS.

Residues 5 to 140 (DYVREVSLAD…ACGRCHGRLI (136 aa)) enclose the SprT-like domain. His-64 provides a ligand contact to Zn(2+). The active site involves Glu-65. His-68 provides a ligand contact to Zn(2+).

The protein belongs to the SprT family. Zn(2+) is required as a cofactor.

It is found in the cytoplasm. The sequence is that of Protein SprT-like from Streptococcus equi subsp. zooepidemicus (strain MGCS10565).